Consider the following 268-residue polypeptide: L-cystine-binding protein TcyA (268 aa).

A signal peptide spans 1 to 19 (MKKALLALFMVVSIAALAA). A lipid anchor (N-palmitoyl cysteine) is attached at Cys-20. A lipid anchor (S-diacylglycerol cysteine) is attached at Cys-20.

The protein belongs to the bacterial solute-binding protein 3 family. As to quaternary structure, the complex is composed of two ATP-binding proteins (TcyC), two transmembrane proteins (TcyB) and a solute-binding protein (TcyA).

It is found in the cell membrane. Part of the ABC transporter complex TcyABC involved in L-cystine import. The protein is L-cystine-binding protein TcyA (tcyA) of Bacillus subtilis (strain 168).